Here is a 587-residue protein sequence, read N- to C-terminus: Branchpoint-bridging protein (587 aa).

Polar residues predominate over residues 1 to 16; it reads MLNSRSVGSTGSNNTP. Disordered regions lie at residues 1–64 and 121–142; these read MLNS…DGRG and GDVVPHHRERSPSPPPQYDNHG. Residues 44–64 are compositionally biased toward basic and acidic residues; it reads DSYKSNSRMDHRPDGYHDGRG. 2 positions are modified to phosphoserine: Ser-131 and Ser-133. In terms of domain architecture, KH spans 191–271; sequence YVPVKDYPEI…DKINHAIKLI (81 aa). CCHC-type zinc fingers lie at residues 309-326 and 334-351; these read QVCQNCGNVGHRRFDCPE and IVCRHCGSIGHIARDCPV. Disordered stretches follow at residues 375-490 and 551-587; these read GGGS…PGTS and IPGATAPPGAPGSYNTSESSNLNAPPGVSMPNGYSNR. A compositionally biased stretch (polar residues) spans 379-399; the sequence is AISNGNGEPQKSIEFSESGAA. The segment covering 410-454 has biased composition (low complexity); that stretch reads AAASTSVSSSTSSPAPWAKPASSAAPSNPAPWQQPAAPQSAPALS. Composition is skewed to polar residues over residues 465-483 and 563-573; these read QPTQQSAVQPSNLVPSQNA and SYNTSESSNLN.

Belongs to the BBP/SF1 family. U2AF large subunit (u2af59), U2AF small subunit (u2af23) and bpb1 interact to form a complex required for complex A formation.

It is found in the cytoplasm. It localises to the nucleus. In terms of biological role, necessary for the splicing of pre-mRNA. The BPB1(SF1)-u2af59-u2af23 complex has a role in the recognition of the branch site (5'-UACUAAC-3'), the pyrimidine tract and the 3'-splice site at the 3'-end of introns. The sequence is that of Branchpoint-bridging protein (bpb1) from Schizosaccharomyces pombe (strain 972 / ATCC 24843) (Fission yeast).